The following is a 511-amino-acid chain: Cytochrome P450 monooxygenase roqR (511 aa).

Residues 1–23 (MSGYVLLTVQLAAVLLLVTLWRA) form the signal peptide. Residues N364, N373, and N383 are each glycosylated (N-linked (GlcNAc...) asparagine). A heme-binding site is contributed by C455.

This sequence belongs to the cytochrome P450 family. Heme is required as a cofactor.

The protein operates within alkaloid biosynthesis. Functionally, cytochrome P450 monooxygenase; part of the gene cluster that mediates the biosynthesis of the mycotoxins roquefortine C and meleagrin. The first stage is catalyzed by the dipeptide synthase roqA which condenses histidine and tryptophan to produce histidyltryptophanyldiketopiperazine (HTD). HTD is then converted to roquefortine C through two possible pathways. In the first pathway, prenyltransferase roqD transforms HTD to the intermediate roquefortine D, which is in turn converted to roquefortine C by the cytochrome P450 monooxygenase roqR. In the second pathway, HTD is first converted to the intermediate dehydrohistidyltryptophanyldi-ketopiperazine (DHTD) by roqR which is then prenylated by roqD to form roquefortine C. Roquefortine C can be further transformed to meleagrin via three more reactions including oxydation to glandicolin A by roqM, which is further reduced to glandicoline B by roqO. Finally, glandicoline B is converted to meleagrin by the glandicoline B O-methyltransferase roqN. More studies identified further branching and additional metabolites produced by the roquefortine/meleagrin cluster, including roquefortine F, roquefortine L, roquefortine M, roquefortine N and neoxaline. The protein is Cytochrome P450 monooxygenase roqR of Penicillium rubens (strain ATCC 28089 / DSM 1075 / NRRL 1951 / Wisconsin 54-1255) (Penicillium chrysogenum).